The chain runs to 277 residues: Phosphonoacetaldehyde hydrolase-like protein (277 aa).

Belongs to the HAD-like hydrolase superfamily. PhnX family.

In Syntrophobacter fumaroxidans (strain DSM 10017 / MPOB), this protein is Phosphonoacetaldehyde hydrolase-like protein (phnX2).